Consider the following 480-residue polypeptide: NADH-quinone oxidoreductase subunit N (480 aa).

The next 13 membrane-spanning stretches (helical) occupy residues 11-31, 38-58, 74-94, 109-129, 163-183, 200-220, 239-259, 273-293, 301-321, 329-349, 372-392, 405-425, and 451-471; these read VIPE…DLFV, ITYG…IALA, GLSD…FLYS, YVLG…YSFL, FILG…LYGI, GAGL…GLAF, PTSV…AIIM, WQGM…VVAI, MLAY…LAGT, LFYT…IILL, FAFI…TVGF, VEMI…AFYY, and VVLS…GLLM.

It belongs to the complex I subunit 2 family. NDH-1 is composed of 14 different subunits. Subunits NuoA, H, J, K, L, M, N constitute the membrane sector of the complex.

Its subcellular location is the cell inner membrane. It carries out the reaction a quinone + NADH + 5 H(+)(in) = a quinol + NAD(+) + 4 H(+)(out). NDH-1 shuttles electrons from NADH, via FMN and iron-sulfur (Fe-S) centers, to quinones in the respiratory chain. The immediate electron acceptor for the enzyme in this species is believed to be ubiquinone. Couples the redox reaction to proton translocation (for every two electrons transferred, four hydrogen ions are translocated across the cytoplasmic membrane), and thus conserves the redox energy in a proton gradient. The chain is NADH-quinone oxidoreductase subunit N from Thioalkalivibrio sulfidiphilus (strain HL-EbGR7).